The chain runs to 491 residues: Synaptotagmin-9 (491 aa).

Topologically, residues 1–52 (MPGARDALCHQALQLLAELCARGALEHDSCQDFIYHLRDRARPRLRDPDISV) are vesicular. The interval 9–31 (CHQALQLLAELCARGALEHDSCQ) is cysteine motif. The helical transmembrane segment at 53-73 (SLLTLVVTACGLALFGVSLFV) threads the bilayer. Residues 74–491 (SWKLCWVPWR…AHWHSLMEKR (418 aa)) are Cytoplasmic-facing. The segment covering 91-104 (SKDNNQEPLNYTDT) has biased composition (polar residues). Residues 91-147 (SKDNNQEPLNYTDTETNEQENSEDFLDPPTPCPDSSMKISHTSPDIPLSTQPGGQEN) are disordered. A compositionally biased stretch (acidic residues) spans 105 to 116 (ETNEQENSEDFL). Polar residues predominate over residues 127 to 144 (MKISHTSPDIPLSTQPGG). Ser177 carries the phosphoserine modification. C2 domains are found at residues 220-341 (ACGK…ILWK) and 352-485 (DLGE…AHWH). Ca(2+) contacts are provided by Asp251, Asp257, Asp309, Phe310, Asp311, Ser314, Asp317, Asp383, Asp389, Asp443, and Asp445.

The protein belongs to the synaptotagmin family. Homodimer; disulfide-linked via the cysteine motif. Can also form heterodimers with SYT3, SYT6, SYT7 and SYT10. Interacts with DNAJC5 and SNAP25, but not with HSC70. The interaction with DNAJC5 is stimulated tenfold in presence of calcium while the interaction with SNAP25 is inhibited. The cofactor is Ca(2+).

The protein resides in the cytoplasmic vesicle. It is found in the secretory vesicle. It localises to the synaptic vesicle membrane. Its function is as follows. May be involved in Ca(2+)-dependent exocytosis of secretory vesicles through Ca(2+) and phospholipid binding to the C2 domain or may serve as Ca(2+) sensors in the process of vesicular trafficking and exocytosis. The polypeptide is Synaptotagmin-9 (Syt9) (Mus musculus (Mouse)).